The following is a 1115-amino-acid chain: Scavenger receptor cysteine-rich type 1 protein M130 (1115 aa).

The first 46 residues, Met1 to Gly46, serve as a signal peptide directing secretion. The Extracellular portion of the chain corresponds to Lys47 to Ser1044. SRCR domains follow at residues Leu51–Ser151, Met158–Leu258, Leu265–Ser365, Leu372–Ser472, Pro477–Ser577, Ile582–Ser682, Leu718–Ser818, Leu823–Ala925, and Ile928–Ser1028. Intrachain disulfides connect Cys76–Cys140, Cys89–Cys150, Cys120–Cys130, Cys183–Cys247, Cys196–Cys257, Cys227–Cys237, Cys290–Cys354, Cys303–Cys364, Cys334–Cys344, Cys397–Cys461, Cys410–Cys471, Cys441–Cys451, Cys502–Cys566, Cys515–Cys576, Cys546–Cys556, Cys607–Cys671, Cys620–Cys681, Cys651–Cys661, Cys743–Cys807, Cys756–Cys817, Cys787–Cys797, Cys863–Cys924, and Cys894–Cys904. An N-linked (GlcNAc...) asparagine glycan is attached at Asn105. A glycan (N-linked (GlcNAc...) asparagine) is linked at Asn139. A glycan (N-linked (GlcNAc...) asparagine) is linked at Asn936. 3 disulfide bridges follow: Cys953–Cys1017, Cys966–Cys1027, and Cys997–Cys1007. The chain crosses the membrane as a helical span at residues Phe1045–Trp1065. Residues Thr1066–Gln1115 lie on the Cytoplasmic side of the membrane. The short motif at Tyr1090–Met1093 is the Internalization signal element.

Interacts with CSNK2B. In terms of processing, a soluble form (sCD163) is produced by proteolytic shedding which can be induced by lipopolysaccharide, phorbol ester and Fc region of immunoglobulin gamma. This cleavage is dependent on protein kinase C and tyrosine kinases and can be blocked by protease inhibitors. The shedding is inhibited by the tissue inhibitor of metalloproteinase TIMP3, and thus probably induced by membrane-bound metalloproteinases ADAMs. Phosphorylated. As to expression, expressed in monocytes and macrophages. Detected only in one population of monocytes (CD163+) which is in advanced maturation stage.

Its subcellular location is the secreted. It is found in the cell membrane. Involved in clearance and endocytosis of hemoglobin/haptoglobin complexes by macrophages and may thereby protect tissues from free hemoglobin-mediated oxidative damage. May play a role in the uptake and recycling of iron, via endocytosis of hemoglobin/haptoglobin and subsequent breakdown of heme. Binds hemoglobin/haptoglobin complexes in a calcium-dependent and pH-dependent manner. Induces a cascade of intracellular signals that involves tyrosine kinase-dependent calcium mobilization, inositol triphosphate production and secretion of IL6 and CSF1. May play a role in the process of infection of porcine monocytes/macrophages by African swine fever virus (ASFV). In case of porcine reproductive and respiratory syndrome virus (PRRSV), serves mediates virion attachment and plays a role in viral entry. Its function is as follows. After shedding, the soluble form (sCD163) may play an anti-inflammatory role. This chain is Scavenger receptor cysteine-rich type 1 protein M130 (CD163), found in Sus scrofa (Pig).